The primary structure comprises 216 residues: 3-isopropylmalate dehydratase small subunit (216 aa).

Belongs to the LeuD family. LeuD type 1 subfamily. In terms of assembly, heterodimer of LeuC and LeuD.

The enzyme catalyses (2R,3S)-3-isopropylmalate = (2S)-2-isopropylmalate. It functions in the pathway amino-acid biosynthesis; L-leucine biosynthesis; L-leucine from 3-methyl-2-oxobutanoate: step 2/4. Catalyzes the isomerization between 2-isopropylmalate and 3-isopropylmalate, via the formation of 2-isopropylmaleate. The chain is 3-isopropylmalate dehydratase small subunit from Polaromonas naphthalenivorans (strain CJ2).